The following is a 146-amino-acid chain: Calmodulin-like protein 5 (146 aa).

Residue Ala2 is modified to N-acetylalanine. EF-hand domains follow at residues 8-43 (EEEA…TGKN), 44-74 (LSEA…TAAK), 78-113 (AGLE…LGQP), and 114-146 (LPQE…LAQE). Residues Asp21, Asp23, Asn25, Thr27, Glu32, Asp57, Asp59, Asp61, Glu63, Glu68, Asp91, Asp93, Asp95, His97, Glu102, Asp127, Asp129, Asp131, Arg133, and Glu138 each contribute to the Ca(2+) site.

As to quaternary structure, associates with transglutaminase 3. In terms of tissue distribution, particularly abundant in the epidermis where its expression is directly related to keratinocyte differentiation. Very low expression in lung.

Functionally, binds calcium. May be involved in terminal differentiation of keratinocytes. This Homo sapiens (Human) protein is Calmodulin-like protein 5 (CALML5).